The primary structure comprises 901 residues: Aconitate hydratase A (901 aa).

[4Fe-4S] cluster is bound by residues cysteine 443, cysteine 509, and cysteine 512.

Belongs to the aconitase/IPM isomerase family. Monomer. The cofactor is [4Fe-4S] cluster.

The catalysed reaction is citrate = D-threo-isocitrate. It carries out the reaction (2S,3R)-3-hydroxybutane-1,2,3-tricarboxylate = 2-methyl-cis-aconitate + H2O. The protein operates within carbohydrate metabolism; tricarboxylic acid cycle; isocitrate from oxaloacetate: step 2/2. It functions in the pathway organic acid metabolism; propanoate degradation. Involved in the catabolism of short chain fatty acids (SCFA) via the tricarboxylic acid (TCA)(acetyl degradation route) and probably the 2-methylcitrate cycle I (propionate degradation route). Catalyzes the reversible isomerization of citrate to isocitrate via cis-aconitate. Could catalyze the hydration of 2-methyl-cis-aconitate to yield (2R,3S)-2-methylisocitrate. The apo form of AcnA functions as a RNA-binding regulatory protein. In Staphylococcus aureus (strain MRSA252), this protein is Aconitate hydratase A (acnA).